Reading from the N-terminus, the 475-residue chain is Cytosolic non-specific dipeptidase (475 aa).

S58 is subject to Phosphoserine. H99 contacts Mn(2+). The active site involves D101. Residue D132 coordinates Mn(2+). E166 (proton acceptor) is an active-site residue. Residues 166–167, D195, and H228 contribute to the substrate site; that span reads EE. Positions 167 and 195 each coordinate Mn(2+). Phosphoserine is present on S299. Positions 330, 343, 417, and 445 each coordinate substrate. H445 lines the Mn(2+) pocket.

The protein belongs to the peptidase M20A family. Homodimer. Requires Mn(2+) as cofactor. In terms of tissue distribution, highly expressed in the parafascicular nucleus of the thalamus, tuberomammillary nucleus of the hypothalamus and the mitral cell layer of the olfactory bulb.

The protein localises to the cytoplasm. It carries out the reaction Hydrolysis of dipeptides, preferentially hydrophobic dipeptides including prolyl amino acids.. The catalysed reaction is L-threonyl-L-threonine + H2O = 2 L-threonine. It catalyses the reaction L-threonyl-L-serine + H2O = L-threonine + L-serine. The enzyme catalyses L-seryl-L-threonine + H2O = L-threonine + L-serine. It carries out the reaction L-cysteinylglycine + H2O = L-cysteine + glycine. The catalysed reaction is L-alanyl-L-cysteine + H2O = L-cysteine + L-alanine. It catalyses the reaction (S)-lactate + L-phenylalanine = N-[(S)-lactoyl]-L-phenylalanine + H2O. Inhibited by bestatin. In terms of biological role, catalyzes the peptide bond hydrolysis in dipeptides, displaying a non-redundant activity toward threonyl dipeptides. Mediates threonyl dipeptide catabolism in a tissue-specific way. Has high dipeptidase activity toward cysteinylglycine, an intermediate metabolite in glutathione metabolism. Metabolizes N-lactoyl-amino acids, both through hydrolysis to form lactic acid and amino acids, as well as through their formation by reverse proteolysis. Plays a role in the regulation of cell cycle arrest and apoptosis. In Mus musculus (Mouse), this protein is Cytosolic non-specific dipeptidase (Cndp2).